Reading from the N-terminus, the 250-residue chain is Proteasome subunit alpha (250 aa).

It belongs to the peptidase T1A family. The 20S proteasome core is composed of 14 alpha and 14 beta subunits that assemble into four stacked heptameric rings, resulting in a barrel-shaped structure. The two inner rings, each composed of seven catalytic beta subunits, are sandwiched by two outer rings, each composed of seven alpha subunits. The catalytic chamber with the active sites is on the inside of the barrel. Has a gated structure, the ends of the cylinder being occluded by the N-termini of the alpha-subunits. Is capped by the proteasome-associated ATPase, ARC.

The protein resides in the cytoplasm. The protein operates within protein degradation; proteasomal Pup-dependent pathway. Its activity is regulated as follows. The formation of the proteasomal ATPase ARC-20S proteasome complex, likely via the docking of the C-termini of ARC into the intersubunit pockets in the alpha-rings, may trigger opening of the gate for substrate entry. Interconversion between the open-gate and close-gate conformations leads to a dynamic regulation of the 20S proteasome proteolysis activity. In terms of biological role, component of the proteasome core, a large protease complex with broad specificity involved in protein degradation. The sequence is that of Proteasome subunit alpha from Mycobacterium sp. (strain JLS).